The sequence spans 259 residues: Probable dihydroorotate dehydrogenase B (NAD(+)), electron transfer subunit (259 aa).

Positions 1 to 89 (MLPLNATITQ…RGPFGKGFTL (89 aa)) constitute an FAD-binding FR-type domain. Residues C211, C216, C219, and C229 each contribute to the [2Fe-2S] cluster site.

The protein belongs to the PyrK family. Heterotetramer of 2 PyrK and 2 PyrD type B subunits. The cofactor is [2Fe-2S] cluster. It depends on FAD as a cofactor.

Its pathway is pyrimidine metabolism; UMP biosynthesis via de novo pathway; orotate from (S)-dihydroorotate (NAD(+) route): step 1/1. In terms of biological role, responsible for channeling the electrons from the oxidation of dihydroorotate from the FMN redox center in the PyrD type B subunit to the ultimate electron acceptor NAD(+). The protein is Probable dihydroorotate dehydrogenase B (NAD(+)), electron transfer subunit of Methanosarcina mazei (strain ATCC BAA-159 / DSM 3647 / Goe1 / Go1 / JCM 11833 / OCM 88) (Methanosarcina frisia).